The chain runs to 100 residues: Small ribosomal subunit protein uS14c (100 aa).

Belongs to the universal ribosomal protein uS14 family. Part of the 30S ribosomal subunit.

It localises to the plastid. Its subcellular location is the chloroplast. Functionally, binds 16S rRNA, required for the assembly of 30S particles. The sequence is that of Small ribosomal subunit protein uS14c from Euglena gracilis.